Reading from the N-terminus, the 318-residue chain is Protein W (318 aa).

Disordered stretches follow at residues 1–24 (MDQD…GRES) and 38–318 (SEPT…KKGA). A compositionally biased stretch (basic and acidic residues) spans 7 to 20 (ISKEDSEVEREASG). The span at 50–61 (LHNTINTLQRPG) shows a compositional bias: polar residues. Basic and acidic residues-rich tracts occupy residues 99 to 110 (AEAHARNVDKQN) and 150 to 168 (GAED…RGED). 3 positions are modified to phosphoserine; by host: serine 249, serine 257, and serine 260.

This is Protein W (P/V/C) from Sendai virus (strain Hamamatsu) (SeV).